The following is a 372-amino-acid chain: Phospho-N-acetylmuramoyl-pentapeptide-transferase (372 aa).

The next 10 membrane-spanning stretches (helical) occupy residues 25 to 45 (RSLL…PVMI), 73 to 93 (TMGG…WADL), 98 to 118 (VWIV…DDWI), 134 to 154 (FFWT…IAQN), 176 to 196 (SIPL…YLVI), 211 to 231 (GLAI…AYLA), 251 to 271 (LVVI…YNAH), 275 to 295 (IFMG…IAVM), 300 to 320 (IVFA…FLQI), and 349 to 369 (QVVT…LMTL).

This sequence belongs to the glycosyltransferase 4 family. MraY subfamily. It depends on Mg(2+) as a cofactor.

The protein localises to the cell inner membrane. It carries out the reaction UDP-N-acetyl-alpha-D-muramoyl-L-alanyl-gamma-D-glutamyl-meso-2,6-diaminopimeloyl-D-alanyl-D-alanine + di-trans,octa-cis-undecaprenyl phosphate = di-trans,octa-cis-undecaprenyl diphospho-N-acetyl-alpha-D-muramoyl-L-alanyl-D-glutamyl-meso-2,6-diaminopimeloyl-D-alanyl-D-alanine + UMP. Its pathway is cell wall biogenesis; peptidoglycan biosynthesis. Functionally, catalyzes the initial step of the lipid cycle reactions in the biosynthesis of the cell wall peptidoglycan: transfers peptidoglycan precursor phospho-MurNAc-pentapeptide from UDP-MurNAc-pentapeptide onto the lipid carrier undecaprenyl phosphate, yielding undecaprenyl-pyrophosphoryl-MurNAc-pentapeptide, known as lipid I. In Acinetobacter baylyi (strain ATCC 33305 / BD413 / ADP1), this protein is Phospho-N-acetylmuramoyl-pentapeptide-transferase.